We begin with the raw amino-acid sequence, 170 residues long: Large ribosomal subunit protein uL10 (170 aa).

Belongs to the universal ribosomal protein uL10 family. In terms of assembly, part of the ribosomal stalk of the 50S ribosomal subunit. The N-terminus interacts with L11 and the large rRNA to form the base of the stalk. The C-terminus forms an elongated spine to which L12 dimers bind in a sequential fashion forming a multimeric L10(L12)X complex.

Forms part of the ribosomal stalk, playing a central role in the interaction of the ribosome with GTP-bound translation factors. In Nitratiruptor sp. (strain SB155-2), this protein is Large ribosomal subunit protein uL10.